A 286-amino-acid chain; its full sequence is ATP synthase gamma chain (286 aa).

Belongs to the ATPase gamma chain family. As to quaternary structure, F-type ATPases have 2 components, CF(1) - the catalytic core - and CF(0) - the membrane proton channel. CF(1) has five subunits: alpha(3), beta(3), gamma(1), delta(1), epsilon(1). CF(0) has three main subunits: a, b and c.

It localises to the cell membrane. In terms of biological role, produces ATP from ADP in the presence of a proton gradient across the membrane. The gamma chain is believed to be important in regulating ATPase activity and the flow of protons through the CF(0) complex. In Malacoplasma penetrans (strain HF-2) (Mycoplasma penetrans), this protein is ATP synthase gamma chain.